Here is a 420-residue protein sequence, read N- to C-terminus: Histidine--tRNA ligase (420 aa).

The protein belongs to the class-II aminoacyl-tRNA synthetase family. Homodimer.

The protein localises to the cytoplasm. The catalysed reaction is tRNA(His) + L-histidine + ATP = L-histidyl-tRNA(His) + AMP + diphosphate + H(+). In Streptomyces avermitilis (strain ATCC 31267 / DSM 46492 / JCM 5070 / NBRC 14893 / NCIMB 12804 / NRRL 8165 / MA-4680), this protein is Histidine--tRNA ligase.